The following is a 95-amino-acid chain: UPF0213 protein ESA_03545 (95 aa).

The GIY-YIG domain maps to 2-77; sequence EEWFLYLIRC…KQLTKRQKEQ (76 aa).

It belongs to the UPF0213 family.

This is UPF0213 protein ESA_03545 from Cronobacter sakazakii (strain ATCC BAA-894) (Enterobacter sakazakii).